A 232-amino-acid chain; its full sequence is Izumo sperm-egg fusion protein 4 (232 aa).

The first 15 residues, 1–15, serve as a signal peptide directing secretion; sequence MALLLCLVCLTAALA. Asn24 and Asn219 each carry an N-linked (GlcNAc...) asparagine glycan.

Belongs to the Izumo family. Detected in sperm.

It is found in the secreted. The chain is Izumo sperm-egg fusion protein 4 (IZUMO4) from Homo sapiens (Human).